The chain runs to 408 residues: Peptidase T (408 aa).

His78 lines the Zn(2+) pocket. Asp80 is a catalytic residue. Asp140 is a Zn(2+) binding site. The Proton acceptor role is filled by Glu173. Zn(2+)-binding residues include Glu174, Asp196, and His379.

Belongs to the peptidase M20B family. It depends on Zn(2+) as a cofactor.

The protein resides in the cytoplasm. The catalysed reaction is Release of the N-terminal residue from a tripeptide.. Cleaves the N-terminal amino acid of tripeptides. The polypeptide is Peptidase T (Salmonella arizonae (strain ATCC BAA-731 / CDC346-86 / RSK2980)).